The chain runs to 148 residues: Deoxyuridine 5'-triphosphate nucleotidohydrolase (148 aa).

Substrate-binding positions include 68–70 (RSG), asparagine 81, 85–87 (TID), and lysine 95.

Belongs to the dUTPase family. The cofactor is Mg(2+).

It catalyses the reaction dUTP + H2O = dUMP + diphosphate + H(+). It functions in the pathway pyrimidine metabolism; dUMP biosynthesis; dUMP from dCTP (dUTP route): step 2/2. This enzyme is involved in nucleotide metabolism: it produces dUMP, the immediate precursor of thymidine nucleotides and it decreases the intracellular concentration of dUTP so that uracil cannot be incorporated into DNA. The sequence is that of Deoxyuridine 5'-triphosphate nucleotidohydrolase from Rickettsia prowazekii (strain Madrid E).